The sequence spans 1477 residues: Alpha-1-inhibitor 3 (1477 aa).

An N-terminal signal peptide occupies residues 1–24 (MKKDREAQLCLFSALLAFLPFASL). Cysteine 48 and cysteine 86 are disulfide-bonded. Asparagine 55 and asparagine 247 each carry an N-linked (GlcNAc...) asparagine glycan. 2 cysteine pairs are disulfide-bonded: cysteine 251-cysteine 295 and cysteine 269-cysteine 283. 4 N-linked (GlcNAc...) asparagine glycosylation sites follow: asparagine 301, asparagine 321, asparagine 393, and asparagine 508. Disulfide bonds link cysteine 468/cysteine 563, cysteine 595/cysteine 774, and cysteine 643/cysteine 678. Residues 601 to 750 (DQSVLLQKPE…TWIWDLVTVN (150 aa)) form a bait region (approximate) region. Asparagine 750, asparagine 777, and asparagine 872 each carry an N-linked (GlcNAc...) asparagine glycan. 4 disulfides stabilise this stretch: cysteine 850–cysteine 886, cysteine 924–cysteine 1324, cysteine 1082–cysteine 1130, and cysteine 1355–cysteine 1470. Positions 975-978 (CGEQ) form a cross-link, isoglutamyl cysteine thioester (Cys-Gln). The N-linked (GlcNAc...) asparagine glycan is linked to asparagine 994. Asparagine 1143, asparagine 1314, and asparagine 1427 each carry an N-linked (GlcNAc...) asparagine glycan.

The protein belongs to the protease inhibitor I39 (alpha-2-macroglobulin) family. In terms of assembly, monomer.

The protein resides in the secreted. Its function is as follows. Protease inhibitor with a wide spectrum of protein targets, which attaches through its thioester function. The protein is Alpha-1-inhibitor 3 (A1i3) of Rattus norvegicus (Rat).